The sequence spans 638 residues: 1-deoxy-D-xylulose-5-phosphate synthase (638 aa).

Thiamine diphosphate-binding positions include H78 and 119–121; that span reads GHS. Residue D151 coordinates Mg(2+). Residues 152–153, N180, Y289, and E371 each bind thiamine diphosphate; that span reads GA. N180 contributes to the Mg(2+) binding site.

Belongs to the transketolase family. DXPS subfamily. As to quaternary structure, homodimer. The cofactor is Mg(2+). Thiamine diphosphate is required as a cofactor.

The catalysed reaction is D-glyceraldehyde 3-phosphate + pyruvate + H(+) = 1-deoxy-D-xylulose 5-phosphate + CO2. It participates in metabolic intermediate biosynthesis; 1-deoxy-D-xylulose 5-phosphate biosynthesis; 1-deoxy-D-xylulose 5-phosphate from D-glyceraldehyde 3-phosphate and pyruvate: step 1/1. Catalyzes the acyloin condensation reaction between C atoms 2 and 3 of pyruvate and glyceraldehyde 3-phosphate to yield 1-deoxy-D-xylulose-5-phosphate (DXP). The sequence is that of 1-deoxy-D-xylulose-5-phosphate synthase from Bartonella bacilliformis (strain ATCC 35685 / KC583 / Herrer 020/F12,63).